We begin with the raw amino-acid sequence, 882 residues long: Leucine--tRNA ligase (882 aa).

Positions 43–53 (PYPSGRIHMGH) match the 'HIGH' region motif. Residues 634–638 (KMSKS) carry the 'KMSKS' region motif. An ATP-binding site is contributed by lysine 637.

Belongs to the class-I aminoacyl-tRNA synthetase family.

The protein resides in the cytoplasm. It carries out the reaction tRNA(Leu) + L-leucine + ATP = L-leucyl-tRNA(Leu) + AMP + diphosphate. The polypeptide is Leucine--tRNA ligase (Rhodopseudomonas palustris (strain BisB18)).